The primary structure comprises 3739 residues: MSTVNEEKYLDYLRRATADLHEARGRLRELEAKAGEPVAIVGMACRLPGGVASPEDLWRLVAGGEDAISEFPQDRGWDVEGLYDPNPEATGKSYAREAGFLYEAGEFDADFFGISPREALAMDPQQRLLLEASWEAFEHAGIPAATARGTSVGVFTGVMYHDYATRLTDVPEGIEGYLGTGNSGSVASGRVAYTLGLEGPAVTVDTACSSSLVALHLAVQALRKGEVDMALAGGVTVMSTPSTFVEFSRQRGLAPDGRSKSFSSTADGTSWSEGVGVLLVERLSDARRKGHRILAVVRGTAVNQDGASSGLTAPNGPSQQRVIRRALADARLTTSDVDVVEAHGTGTRLGDPIEAQAVIATYGQGRDGEQPLRLGSLKSNIGHTQAAAGVSGVIKMVQAMRHGVLPKTLHVEKPTDQVDWSAGAVELLTEAMDWPDKGDGGLRRAAVSSFGVSGTNAHVVLEEAPAAEETPASEATPAVEPSVGAGLVPWLVSAKTPAALDAQIGRLAAFASQGRTDAADPGAVARVLAGGRAEFEHRAVVLGTGQDDFAQALTAPEGLIRGTPSDVGRVAFVFPGQGTQWAGMGAELLDVSKEFAAAMAECESALSRYVDWSLEAVVRQAPGAPTLERVDVVQPVTFAVMVSLAKVWQHHGVTPQAVVGHSQGEIAAAYVAGALTLDDAARVVTLRSKSIAAHLAGKGGMISLALSEEATRQRIENLHGLSIAAVNGPTATVVSGDPTQIQELAQACEADGVRARIIPVDYASHSAHVETIESELAEVLAGLSPRTPEVPFFSTLEGAWITEPVLDGTYWYRNLRHRVGFAPAVETLATDEGFTHFIEVSAHPVLTMTLPETVTGLGTLRREQGGQERLVTSLAEAWTNGLTIDWAPVLPTATGHHPELPTYAFQRRHYWLHDSPAVQGSVQDSWRYRIDWKRLAVADASERAGLSGRWLVVVPEDRSAEAAPVLAALSGAGADPVQLDVSPLGDRQRLAATLGEALAAAGGAVDGVLSLLAWDESAHPGHPAPFTRGTGATLTLVQALEDAGVAAPLWCVTHGAVSVGRADHVTSPAQAMVWGMGRVAALEHPERWGGLIDLPSDADRAALDRMTTVLAGGTGEDQVAVRASGLLARRLVRASLPAHGTASPWWQADGTVLVTGAEEPAAAEAARRLARDGAGHLLLHTTPSGSEGAEGTSGAAEDSGLAGLVAELADLGATATVVTCDLTDAEAAARLLAGVSDAHPLSAVLHLPPTVDSEPLAATDADALARVVTAKATAALHLDRLLREAAAAGGRPPVLVLFSSVAAIWGGAGQGAYAAGTAFLDALAGQHRADGPTVTSVAWSPWEGSRVTEGATGERLRRLGLRPLAPATALTALDTALGHGDTAVTIADVDWSSFAPGFTTARPGTLLADLPEARRALDEQQSTTAADDTVLSRELGALTGAEQQRRMQELVREHLAVVLNHPSPEAVDTGRAFRDLGFDSLTAVELRNRLKNATGLALPATLVFDYPTPRTLAEFLLAEILGEQAGAGEQLPVDGGVDDEPVAIVGMACRLPGGVASPEDLWRLVAGGEDAISGFPQDRGWDVEGLYDPDPDASGRTYCRAGGFLDEAGEFDADFFGISPREALAMDPQQRLLLETSWEAVEDAGIDPTSLQGQQVGVFAGTNGPHYEPLLRNTAEDLEGYVGTGNAASIMSGRVSYTLGLEGPAVTVDTACSSSLVALHLAVQALRKGECGLALAGGVTVMSTPTTFVEFSRQRGLAEDGRSKAFAASADGFGPAEGVGMLLVERLSDARRNGHRVLAVVRGSAVNQDGASNGLTAPNGPSQQRVIRRALADARLTTADVDVVEAHGTGTRLGDPIEAQALIATYGQGRDTEQPLRLGSLKSNIGHTQAAAGVSGIIKMVQAMRHGVLPKTLHVDRPSDQIDWSAGTVELLTEAMDWPRKQEGGLRRAAVSSFGISGTNAHIVLEEAPVDEDAPADEPSVGGVVPWLVSAKTPAALDAQIGRLAAFASQGRTDAADPGAVARVLAGGRAQFEHRAVALGTGQDDLAAALAAPEGLVRGVASGVGRVAFVFPGQGTQWAGMGAELLDVSKEFAAAMAECEAALAPYVDWSLEAVVRQAPGAPTLERVDVVQPVTFAVMVSLAKVWQHHGVTPQAVVGHSQGEIAAAYVAGALSLDDAARVVTLRSKSIGAHLAGQGGMLSLALSEAAVVERLAGFDGLSVAAVNGPTATVVSGDPTQIQELAQACEADGVRARIIPVDYASHSAHVETIESELADVLAGLSPQTPQVPFFSTLEGAWITEPALDGGYWYRNLRHRVGFAPAVETLATDEGFTHFVEVSAHPVLTMALPETVTGLGTLRRDNGGQHRLTTSLAEAWANGLTVDWASLLPTTTTHPDLPTYAFQTERYWPQPDLSAAGDITSAGLGAAEHPLLGAAVALADSDGCLLTGSLSLRTHPWLADHAVAGTVLLPGTAFVELAFRAGDQVGCDLVEELTLDAPLVLPRRGAVRVQLSVGASDESGRRTFGLYAHPEDAPGEAEWTRHATGVLAARADRTAPVADPEAWPPPGAEPVDVDGLYERFAANGYGYGPLFQGVRGVWRRGDEVFADVALPAEVAGAEGARFGLHPALLDAAVQAAGAGRGVRRGHAAAVRLERDLLYAVGATALRVRLAPAGPDTVSVSAADSSGQPVFAADSLTVLPVDPAQLAAFSDPTLDALHLLEWTAWDGAAQALPGAVVLGGDADGLAAALRAGGTEVLSFPDLTDLVEAVDRGETPAPATVLVACPAAGPDGPEHVREALHGSLALMQAWLADERFTDGRLVLVTRDAVAARSGDGLRSTGQAAVWGLGRSAQTESPGRFVLLDLAGEARTAGDATAGDGLTTGDATVGGTSGDAALGSALATALGSGEPQLALRDGALLVPRLARAAAPAAADGLAAADGLAALPLPAAPALWRLEPGTDGSLESLTAAPGDAETLAPEPLGPGQVRIAIRATGLNFRDVLIALGMYPDPALMGTEGAGVVTATGPGVTHLAPGDRVMGLLSGAYAPVVVADARTVARMPEGWTFAQGASVPVVFLTAVYALRDLADVKPGERLLVHSAAGGVGMAAVQLARHWGVEVHGTASHGKWDALRALGLDDAHIASSRTLDFESAFRAASGGAGMDVVLNSLAREFVDASLRLLGPGGRFVEMGKTDVRDAERVAADHPGVGYRAFDLGEAGPERIGEMLAEVIALFEDGVLRHLPVTTWDVRRARDAFRHVSQARHTGKVVLTMPSGLDPEGTVLLTGGTGALGGIVARHVVGEWGVRRLLLVSRRGTDAPGAGELVHELEALGADVSVAACDVADREALTAVLDSIPAEHPLTAVVHTAGVLSDGTLPSMTAEDVEHVLRPKVDAAFLLDELTSTPGYDLAAFVMFSSAAAVFGGAGQGAYAAANATLDALAWRRRTAGLPALSLGWGLWAETSGMTGGLSDTDRSRLARSGATPMDSELTLSLLDAAMRRDDPALVPIALDVAALRAQQRDGMLAPLLSGLTRGSRVGGAPVNQRRAAAGGAGEADTDLGGRLAAMTPDDRVAHLRDLVRTHVATVLGHGTPSRVDLERAFRDTGFDSLTAVELRNRLNAATGLRLPATLVFDHPTPGELAGHLLDELATAAGGSWAEGTGSGDTASATDRQTTAALAELDRLEGVLASLAPAAGGRPELAARLRALAAALGDDGDDATDLDEASDDDLFSFIDKELGDSDF.

A Ketosynthase family 3 (KS3) 1 domain is found at 35–463; it reads GEPVAIVGMA…GTNAHVVLEE (429 aa). 2 module regions span residues 38–1517 and 1542–3642; these read VAIV…EFLL and VAIV…GHLL. Cysteine 208 acts as the Acyl-thioester intermediate; for beta-ketoacyl synthase 1 activity in catalysis. Residues histidine 343 and histidine 383 each act as for beta-ketoacyl synthase 1 activity in the active site. Residues 572 to 877 are acyltransferase 1; it reads FVFPGQGTQW…ERLVTSLAEA (306 aa). Serine 662 functions as the Acyl-ester intermediate; for acyltransferase 1 activity in the catalytic mechanism. The tract at residues 1150–1343 is C2-type beta-ketoacyl reductase 1; the sequence is GTVLVTGAEE…VTSVAWSPWE (194 aa). The active-site For C2-type beta-ketoacyl reductase 1 and probable racemase activities is tyrosine 1313. Positions 1445–1520 constitute a Carrier 1 domain; that stretch reads RRMQELVREH…TLAEFLLAEI (76 aa). Serine 1480 is subject to O-(pantetheine 4'-phosphoryl)serine. Residues 1539-1967 form the Ketosynthase family 3 (KS3) 2 domain; the sequence is DEPVAIVGMA…GTNAHIVLEE (429 aa). The Acyl-thioester intermediate; for beta-ketoacyl synthase 2 activity role is filled by cysteine 1712. Residues histidine 1847 and histidine 1887 each act as for beta-ketoacyl synthase 2 activity in the active site. Residues 2069 to 2374 are acyltransferase 2; the sequence is FVFPGQGTQW…HRLTTSLAEA (306 aa). The Acyl-ester intermediate; for acyltransferase 2 activity role is filled by serine 2159. The segment at 2428-2553 is N-terminal hotdog fold; it reads HPLLGAAVAL…GVLAARADRT (126 aa). A dehydratase region spans residues 2428-2703; that stretch reads HPLLGAAVAL…LTVLPVDPAQ (276 aa). The region spanning 2428–2705 is the PKS/mFAS DH domain; that stretch reads HPLLGAAVAL…VLPVDPAQLA (278 aa). The active-site Proton acceptor; for dehydratase activity is the histidine 2460. The C-terminal hotdog fold stretch occupies residues 2567 to 2705; the sequence is AEPVDVDGLY…VLPVDPAQLA (139 aa). Aspartate 2629 functions as the Proton donor; for dehydratase activity in the catalytic mechanism. Positions 2959 to 3267 are enoyl reductase; sequence GSLESLTAAP…QARHTGKVVL (309 aa). The For enoyl reductase activity role is filled by tyrosine 3005. Residues 3092 to 3109, 3285 to 3288, 3309 to 3312, 3338 to 3339, lysine 3388, and 3412 to 3413 each bind NADP(+); these read LLVH…VQLA, TGAL, SRRG, DV, and FS. The segment at 3277–3458 is beta-ketoacyl reductase 2; that stretch reads GTVLLTGGTG…LSLGWGLWAE (182 aa). The active-site For beta-ketoacyl reductase 2 activity is tyrosine 3427. The 76-residue stretch at 3570 to 3645 folds into the Carrier 2 domain; that stretch reads AHLRDLVRTH…ELAGHLLDEL (76 aa). Position 3605 is an O-(pantetheine 4'-phosphoryl)serine (serine 3605).

As to quaternary structure, homodimer. Pikromycin PKS consists of a combination of multimodular (PikAI and PikAII) and monomodular (PikAIII and PikAIV) polypeptides each coding for a functional synthase subunit which participates in 1 (monomodular) or 2 (multimodular) of the six FAS-like elongation steps required for formation of the polyketide. Module 1, 2, 3, 4, 5, and 6 participating in biosynthesis steps 1, 2, 3, 4, 5, and 6, respectively. The cofactor is pantetheine 4'-phosphate.

It catalyses the reaction 5 (S)-methylmalonyl-CoA + malonyl-CoA + 5 NADPH + 11 H(+) = 10-deoxymethynolide + 6 CO2 + 5 NADP(+) + 6 CoA + 2 H2O. The catalysed reaction is 6 (S)-methylmalonyl-CoA + malonyl-CoA + 5 NADPH + 12 H(+) = narbonolide + 7 CO2 + 5 NADP(+) + 7 CoA + 2 H2O. The protein operates within antibiotic biosynthesis. Its function is as follows. Involved in the biosynthesis of 12- and 14-membered ring macrolactone antibiotics such as methymycin/neomethymycin and pikromycin/narbomycin, respectively. Component of the pikromycin PKS which catalyzes the biosynthesis of both precursors 10-deoxymethynolide (12-membered ring macrolactone) and narbonolide (14-membered ring macrolactone). Chain elongation through PikAI, PikAII and PikAIII followed by thioesterase catalyzed termination results in the production of 10-deoxymethynolide, while continued elongation through PikAIV, followed by thioesterase (TE) catalyzed cyclization results in the biosynthesis of the narbonolide. This chain is Pikromycin polyketide synthase component PikAII, found in Streptomyces venezuelae.